The chain runs to 315 residues: Mitochondrial glycine transporter (315 aa).

Solcar repeat units follow at residues 19 to 102 (SKTT…LRTG), 125 to 206 (TANL…LKRR), and 221 to 305 (KSSS…LILR). 6 helical membrane passes run 25–50 (FTAGLFSGLTSSILLQPADLLKTRVQ), 77–103 (GTLPSALRTGFGSALYFTSLNALRTGL), 128–153 (LATGAAARVAAGFVMMPVTVIKVRYE), 181–204 (GFGATAARDAPYAGLYVLFYEQLK), 225–251 (INFVSGGLAAGLATTITNPFDAVKTRL), and 280–298 (GLGLRITRKALSSALAWTV).

This sequence belongs to the mitochondrial carrier (TC 2.A.29) family. SLC25A38 subfamily.

The protein localises to the mitochondrion inner membrane. It catalyses the reaction glycine(in) = glycine(out). In terms of biological role, mitochondrial glycine transporter that imports glycine into the mitochondrial matrix. Plays an important role in providing glycine for the first enzymatic step in heme biosynthesis, the condensation of glycine with succinyl-CoA to produce 5-aminolevulinate (ALA) in the mitochondrial matrix. The chain is Mitochondrial glycine transporter from Aspergillus niger (strain ATCC MYA-4892 / CBS 513.88 / FGSC A1513).